The sequence spans 197 residues: Recombination protein RecR (197 aa).

A C4-type zinc finger spans residues 56-71 (CNVCFHFSADPICEIC). A Toprim domain is found at 79–173 (QTICVVADSR…KVTRIAFGLP (95 aa)).

This sequence belongs to the RecR family.

May play a role in DNA repair. It seems to be involved in an RecBC-independent recombinational process of DNA repair. It may act with RecF and RecO. This is Recombination protein RecR from Rippkaea orientalis (strain PCC 8801 / RF-1) (Cyanothece sp. (strain PCC 8801)).